An 881-amino-acid chain; its full sequence is Beta-mannosidase (881 aa).

Residues 1–18 (MHLHLLFLLALCGAGCMA) form the signal peptide. 4 N-linked (GlcNAc...) asparagine glycosylation sites follow: Asn35, Asn77, Asn89, and Asn113. Cys167 and Cys176 are joined by a disulfide. 190 to 192 (WDW) serves as a coordination point for substrate. 3 N-linked (GlcNAc...) asparagine glycosylation sites follow: Asn226, Asn297, and Asn302. Position 456 (Asn456) interacts with substrate. The Proton donor role is filled by Glu457. 3 cysteine pairs are disulfide-bonded: Cys540-Cys629, Cys732-Cys761, and Cys764-Cys769. Glu554 functions as the Nucleophile in the catalytic mechanism. Asn803 carries N-linked (GlcNAc...) asparagine glycosylation.

This sequence belongs to the glycosyl hydrolase 2 family. In terms of assembly, monomer.

Its subcellular location is the lysosome. It carries out the reaction Hydrolysis of terminal, non-reducing beta-D-mannose residues in beta-D-mannosides.. Its pathway is glycan metabolism; N-glycan degradation. Functionally, exoglycosidase that cleaves the single beta-linked mannose residue from the non-reducing end of all N-linked glycoprotein oligosaccharides. The polypeptide is Beta-mannosidase (Rattus norvegicus (Rat)).